The chain runs to 885 residues: Alanine--tRNA ligase (885 aa).

His-571, His-575, Cys-674, and His-678 together coordinate Zn(2+).

Belongs to the class-II aminoacyl-tRNA synthetase family. Zn(2+) is required as a cofactor.

It is found in the cytoplasm. The catalysed reaction is tRNA(Ala) + L-alanine + ATP = L-alanyl-tRNA(Ala) + AMP + diphosphate. Catalyzes the attachment of alanine to tRNA(Ala) in a two-step reaction: alanine is first activated by ATP to form Ala-AMP and then transferred to the acceptor end of tRNA(Ala). Also edits incorrectly charged Ser-tRNA(Ala) and Gly-tRNA(Ala) via its editing domain. The chain is Alanine--tRNA ligase from Clavibacter michiganensis subsp. michiganensis (strain NCPPB 382).